A 74-amino-acid polypeptide reads, in one-letter code: Antimicrobial peptide 36.4 (74 aa).

Positions 1–22 are cleaved as a signal peptide; it reads MKVNVLLAVFLVVMVVTDHCHA. K39 carries the post-translational modification Lysine amide. A propeptide spanning residues 44 to 74 is cleaved from the precursor; that stretch reads LQMEARFQPQNKNYRKRELDLENLFTHMPDY.

The protein belongs to the non-disulfide-bridged peptide (NDBP) superfamily. Short antimicrobial peptide (group 4) family. In terms of tissue distribution, expressed by the venom gland.

The protein resides in the secreted. The protein localises to the target cell membrane. Cationic host defense peptide that have antibacterial activity by breaking membranes. Is more effective on Gram-positive than on Gram-negative bacteria. The polypeptide is Antimicrobial peptide 36.4 (Lychas mucronatus (Chinese swimming scorpion)).